Here is a 469-residue protein sequence, read N- to C-terminus: MATRVYMHTLGCPKNRVDSEVMLGTLAEAGYRLVQDPAQAEVIVVNTCGFIESAKEESVEAIVELADQKREGRCRKLVVTGCLVQRHAEELARELPEVDHFLGTGAYQDVARIVSDAQAKRLVVPDPDFVHSSATPRVNSLPSHTAYLKIAEGCDNACAFCIIPKLRGGQRSRPIDDLVAEAAALAAQGTVELSLVAQDLTAYGQDLPGKVRLHHLLPELAKVDGIRWIRLHYAYPRDVPDALVAAIADEPRIVKYLDMPLQHSSDRLLRAMKRGRDSVFLRDLLARLRSRIPGLALRTALIVGLPGETEADFEDLLRFVEEQRFERLGVFEYSAEEGTPAAEMADQVPDAVKRERRDRIMAVQQAISRAHQQAMIGRRVEVLVEGRAEETEHLLAGRHAQQAPEIDGLTYINDGVAYPGEIVTVEITDAAEYDLVGRVVARDPSRAARPLPAAPRAAPARKGGLNVLR.

In terms of domain architecture, MTTase N-terminal spans 3–119 (TRVYMHTLGC…VARIVSDAQA (117 aa)). [4Fe-4S] cluster contacts are provided by Cys-12, Cys-48, Cys-82, Cys-154, Cys-158, and Cys-161. Residues 140-370 (SLPSHTAYLK…MAVQQAISRA (231 aa)) form the Radical SAM core domain. The 69-residue stretch at 373–441 (QAMIGRRVEV…EYDLVGRVVA (69 aa)) folds into the TRAM domain. The interval 444 to 469 (PSRAARPLPAAPRAAPARKGGLNVLR) is disordered. Over residues 447–461 (AARPLPAAPRAAPAR) the composition is skewed to low complexity.

This sequence belongs to the methylthiotransferase family. RimO subfamily. [4Fe-4S] cluster is required as a cofactor.

Its subcellular location is the cytoplasm. The enzyme catalyses L-aspartate(89)-[ribosomal protein uS12]-hydrogen + (sulfur carrier)-SH + AH2 + 2 S-adenosyl-L-methionine = 3-methylsulfanyl-L-aspartate(89)-[ribosomal protein uS12]-hydrogen + (sulfur carrier)-H + 5'-deoxyadenosine + L-methionine + A + S-adenosyl-L-homocysteine + 2 H(+). Catalyzes the methylthiolation of an aspartic acid residue of ribosomal protein uS12. The polypeptide is Ribosomal protein uS12 methylthiotransferase RimO (Anaeromyxobacter sp. (strain K)).